The sequence spans 307 residues: Ornithine carbamoyltransferase (307 aa).

Carbamoyl phosphate contacts are provided by residues 54 to 57 (STRT), Gln-81, Arg-105, and 132 to 135 (HPCQ). L-ornithine contacts are provided by residues Asn-163, Asp-221, and 225–226 (SM). Carbamoyl phosphate is bound by residues 261–262 (CL) and Arg-289.

This sequence belongs to the aspartate/ornithine carbamoyltransferase superfamily. OTCase family.

The protein localises to the cytoplasm. It carries out the reaction carbamoyl phosphate + L-ornithine = L-citrulline + phosphate + H(+). It functions in the pathway amino-acid biosynthesis; L-arginine biosynthesis; L-arginine from L-ornithine and carbamoyl phosphate: step 1/3. Reversibly catalyzes the transfer of the carbamoyl group from carbamoyl phosphate (CP) to the N(epsilon) atom of ornithine (ORN) to produce L-citrulline. The polypeptide is Ornithine carbamoyltransferase (Aromatoleum aromaticum (strain DSM 19018 / LMG 30748 / EbN1) (Azoarcus sp. (strain EbN1))).